The chain runs to 172 residues: Translationally-controlled tumor protein homolog (172 aa).

Positions 1-172 constitute a TCTP domain; the sequence is MIIYRDCISQ…FKDGLEIEKC (172 aa). Residue S46 is modified to Phosphoserine; by PLK1.

The protein belongs to the TCTP family.

Its subcellular location is the cytoplasm. In terms of biological role, involved in calcium binding and microtubule stabilization. This chain is Translationally-controlled tumor protein homolog (TPT1), found in Gallus gallus (Chicken).